The sequence spans 512 residues: Monocarboxylate transporter 10 (512 aa).

The segment at 1 to 44 (MVPSQEEPAAERETNEAQPPGPAPSDDAPLPGPGPSDVSDVAAE) is disordered. Residues 1 to 63 (MVPSQEEPAA…AGSEPPVPPE (63 aa)) lie on the Cytoplasmic side of the membrane. A helical membrane pass occupies residues 64-84 (GGWGWLVMLAAMWCNGSVFGI). The Extracellular portion of the chain corresponds to 85 to 111 (QNAYGVLFVSMLDTFKAKDDDNMAFKT). Residues 112-132 (AWVGSLSMGMIFFCCPIVSVF) traverse the membrane as a helical segment. Topologically, residues 133 to 141 (TDMFGCRRT) are cytoplasmic. Residues 142-162 (AVVGAAVGFIGLMSSSFVSSI) traverse the membrane as a helical segment. The Extracellular segment spans residues 163–168 (EPLYLT). The helical transmembrane segment at 169-189 (YGIIFACGCSFAYQPSLVILG) threads the bilayer. The Cytoplasmic portion of the chain corresponds to 190-201 (HYFKKRLGLVNG). A helical transmembrane segment spans residues 202 to 222 (IVTAGSSVFTILLPLLLGNLI). At 223–232 (SSVKLFNTLR) the chain is on the extracellular side. The helical transmembrane segment at 233 to 253 (ILCIFMFVLFLAGFTYRPLVP) threads the bilayer. The Cytoplasmic portion of the chain corresponds to 254 to 291 (STKEKESGGSRSSFFSRRKLSPPKKVFNFALFKETTYA). The residue at position 260 (S260) is a Phosphoserine. A helical membrane pass occupies residues 292 to 312 (VWAAGIPLALFGYFVPYVHLM). The Extracellular portion of the chain corresponds to 313–326 (NHVKERFQDVNNKE). The chain crosses the membrane as a helical span at residues 327 to 347 (VLFMCIGITSGVGRLLFGRIA). The Cytoplasmic portion of the chain corresponds to 348–362 (DYLPGVKKVYLQVLS). Residues 363–383 (FFFIGLMSMMIPLCSAFGALI) form a helical membrane-spanning segment. Residue A384 is a topological domain, extracellular. A helical transmembrane segment spans residues 385–405 (VCLAMGLFDGCFISIMAPIAF). Residues 406–416 (ELVGPQDASQA) are Cytoplasmic-facing. Residues 417–437 (IGFLLGFMSIPMTVGPPIAGL) traverse the membrane as a helical segment. Residues 438–448 (LHDKLGTYDVA) are Extracellular-facing. The helical transmembrane segment at 449-469 (FYLAGIPPFVGGVVLCLIPWI) threads the bilayer. Topologically, residues 470–512 (HSKKQRKISKNAGGEKMEKMLENQSSLLSGSSGIFKKDSASII) are cytoplasmic. S495, S498, S500, and S501 each carry phosphoserine.

The protein belongs to the major facilitator superfamily. Monocarboxylate porter (TC 2.A.1.13) family. In terms of processing, not N-glycosylated. In terms of tissue distribution, highly expressed in small intestine, particularly in jejunum and ileum, scarcely in colon and substantially in kidney, liver and skeletal muscle. In the brain expression is low and appears to be restricted to a subset of neurons, microglia cells, and oligodendrocytes.

The protein resides in the cell membrane. It localises to the basolateral cell membrane. The enzyme catalyses L-tryptophan(in) = L-tryptophan(out). It carries out the reaction L-tyrosine(in) = L-tyrosine(out). The catalysed reaction is L-phenylalanine(in) = L-phenylalanine(out). It catalyses the reaction 3,3',5-triiodo-L-thyronine(out) = 3,3',5-triiodo-L-thyronine(in). The enzyme catalyses L-thyroxine(out) = L-thyroxine(in). Its function is as follows. Sodium- and proton-independent thyroid hormones and aromatic acids transporter. Mediates both uptake and efflux of 3,5,3'-triiodothyronine (T3) and 3,5,3',5'-tetraiodothyronine (T4) with high affinity, suggesting a role in the homeostasis of thyroid hormone levels. Responsible for low affinity bidirectional transport of the aromatic amino acids, such as phenylalanine, tyrosine, tryptophan and L-3,4-dihydroxyphenylalanine (L-dopa). Plays an important role in homeostasis of aromatic amino acids. The protein is Monocarboxylate transporter 10 (Slc16a10) of Mus musculus (Mouse).